The sequence spans 686 residues: MKGTSALLLIGFFHATISQDPGGTVVIGSLSGRKRGNLNTGGQITSNSAILGDVNAGSKLSEPPKRRNTDKTARMLENNPRIGGSLIPPPGVIMEPNPYDINPPYFVSNKNSQSTNSATNTMLQSLTSDTKTTTRTSQTSSTRASSSITQGINTMNRNSMRFNQVDRNKISGFVNSGGQIQTNPLNTNSQSSPILAAQRQITRQKSENTQGNSIVRNGGTNSLNIPSSTRRSQPPNMAVQIGQNTATFNMGTDGKVLHKFLPTNLFENINSVSKEPRNTASVPGIGGMRNPGPSISIRNIFGTNNIEGSSVQLTGSSGVFVSDPGPKGNPTDVPQFVPSGISPTVRDPNALDPFKSIRNQIVPDIKRNEVNRGNSMISAPVIDNPTNSNSMVELNSILQNVQNGFLSEALGNSNNQNNRVTNIVNQINSADPQPVRRCQFLPYRDLRTNKIDRRYFRQLVNGKWLNLKCADGAGFNETTCLCSIHLTGDAQCSPEVRLNFNDGTIQNLTPINVHIDAEGVDASKGWAHFNGSTQMKFEYFNAYDVQRDFLIKLRFKADSYIPNQSHPIVTNCVAGQENTDPSIGVFLTGNYPHKIVFILQTDKSKLLQHLIFDVPRDGWHDITYKYDGSTLTGILDGKEKSLPTEGRIENRQAVLVFGGCGNRIFRGNIDDIQIYTCIPPSHRNKG.

The signal sequence occupies residues 1–18 (MKGTSALLLIGFFHATIS). Disordered regions lie at residues 34–73 (KRGN…DKTA), 125–148 (SLTS…SSSI), and 201–236 (ITRQ…QPPN). Over residues 37 to 49 (NLNTGGQITSNSA) the composition is skewed to polar residues. A compositionally biased stretch (basic and acidic residues) spans 62–73 (EPPKRRNTDKTA).

As to expression, prismatic layer of shell (at protein level). Expressed primarily in the mantle with highest level in the mantle edge and lower level in the mantle pallium.

It is found in the secreted. This chain is Asparagine-rich protein, found in Margaritifera margaritifera (Freshwater pearl mussel).